Reading from the N-terminus, the 395-residue chain is Type III polyketide synthase A (395 aa).

63 to 70 (KLEHLCKT) provides a ligand contact to CoA. Catalysis depends on C172, which acts as the Nucleophile. 224–225 (GD) is a binding site for substrate. Residues L274, 314–317 (GGPA), and A317 each bind CoA.

The protein belongs to the thiolase-like superfamily. Chalcone/stilbene synthases family. As to quaternary structure, homodimer. Interacts with 4CLL1/ACOS5 and TKPR1. Expressed in flowers and flower buds (at protein level), and, at very low levels, in roots, seedlings, leaves and stems. Mostly confined to anther tapetal cells.

The protein resides in the endoplasmic reticulum. The protein operates within secondary metabolite biosynthesis; flavonoid biosynthesis. Functionally, plant type III polyketide synthases (PKSs) that catalyzes the condensation of malonyl-CoA units with various CoA ester starter molecules to generate a diverse array of natural products including long-chain alkyl alpha-pyrones. Accepts up to C(20) chain-length fatty acyl CoAs as starter substrates, and carries out sequential condensations with malonyl-CoA to produce triketide and tetraketide alpha-pyrones, potential sporopollenin precursors. Favorite substrates for are midchain- and v-hydroxylated fatty acyl-CoAs (e.g. 12-hydroxyoctadecanoyl-CoA and 16-hydroxyhexadecanoyl-CoA). Required for pollen development and sporopollenin biosynthesis, the major constituent of exine in the outer pollen wall. In vitro, can use 4-coumaroyl-coenzyme A as substrate to produce bis-noryangonin and fatty acyl-coenzyme A as substrate to produce medium-chain alkyl pyrones. May play a role in both the synthesis of pollen fatty acids and phenolics found in exine. The protein is Type III polyketide synthase A of Arabidopsis thaliana (Mouse-ear cress).